A 489-amino-acid chain; its full sequence is Ataxin-10 homolog (489 aa).

It belongs to the ataxin-10 family.

The protein localises to the cytoplasm. Functionally, may play a role in the regulation of cytokinesis. The protein is Ataxin-10 homolog (CTR86) of Debaryomyces hansenii (strain ATCC 36239 / CBS 767 / BCRC 21394 / JCM 1990 / NBRC 0083 / IGC 2968) (Yeast).